We begin with the raw amino-acid sequence, 499 residues long: MTDRPIMTTSAGAPIPDNQNSLTAGERGPILMQDYQLIEKLSHQNRERIPERAVHAKGWGAYGTLTITGDISRYTKAKVLQPGAQTPMLARFSTVAGELGAADAERDVRGFALKFYTQEGNWDLVGNNTPVFFVRDPLKFPDFIHTQKRHPRTHLRSATAMWDFWSLSPESLHQVTILMSDRGLPTDVRHINGYGSHTYSFWNDAGERYWVKFHFKTMQGHKHWTNAEAEQVIGRTRESTQEDLFSAIENGEFPKWKVQVQIMPELDADKTPYNPFDLTKVWPHADYPPIDIGVMELNRNPENYFTEVENAAFSPSNIVPGIGFSPDKMLQARIFSYADAHRHRLGTHYESIPVNQPKCPVHHYHRDGQMNVYGGIKTGNPDAYYEPNSFNGPVEQPSAKEPPLCISGNADRYNHRIGNDDYSQPRALFNLFDAAQKQRLFSNIAAAMKGVPGFIVERQLGHFKLIHPEYEAGVRKALKDAHGYDANTIALNEKITAAE.

A disordered region spans residues 1-25; sequence MTDRPIMTTSAGAPIPDNQNSLTAG. The span at 7 to 23 shows a compositional bias: polar residues; sequence MTTSAGAPIPDNQNSLT. Residues histidine 55 and asparagine 127 contribute to the active site. Tyrosine 337 serves as a coordination point for heme.

The protein belongs to the catalase family. As to quaternary structure, homotetramer. Heme serves as cofactor.

The protein localises to the periplasm. The catalysed reaction is 2 H2O2 = O2 + 2 H2O. Decomposes hydrogen peroxide into water and oxygen; serves to protect cells from the toxic effects of hydrogen peroxide. This Brucella abortus biovar 1 (strain 9-941) protein is Catalase (katA).